The following is a 560-amino-acid chain: Arginine--tRNA ligase (560 aa).

Positions 121–131 (PNIAKPFSMGH) match the 'HIGH' region motif.

This sequence belongs to the class-I aminoacyl-tRNA synthetase family. Monomer.

It localises to the cytoplasm. The enzyme catalyses tRNA(Arg) + L-arginine + ATP = L-arginyl-tRNA(Arg) + AMP + diphosphate. In Exiguobacterium sibiricum (strain DSM 17290 / CCUG 55495 / CIP 109462 / JCM 13490 / 255-15), this protein is Arginine--tRNA ligase.